A 520-amino-acid polypeptide reads, in one-letter code: GMP synthase [glutamine-hydrolyzing] (520 aa).

The Glutamine amidotransferase type-1 domain maps to lysine 12–aspartate 205. Cysteine 89 serves as the catalytic Nucleophile. Catalysis depends on residues histidine 179 and glutamate 181. One can recognise a GMPS ATP-PPase domain in the interval tryptophan 206–arginine 395. Residue serine 233 to serine 239 participates in ATP binding.

Homodimer.

It catalyses the reaction XMP + L-glutamine + ATP + H2O = GMP + L-glutamate + AMP + diphosphate + 2 H(+). Its pathway is purine metabolism; GMP biosynthesis; GMP from XMP (L-Gln route): step 1/1. Its function is as follows. Catalyzes the synthesis of GMP from XMP. This Streptococcus agalactiae serotype III (strain NEM316) protein is GMP synthase [glutamine-hydrolyzing].